The following is a 784-amino-acid chain: MKKRIPTLLATMIATALYSQQGLAADLASQCMLGVPSYDRPLVQGDTNDLPVTINADHAKGDYPDDAVFTGSVDIMQGNSRLQADEVQLHQKEAPGQPEPVRTVDALGNVHYDDNQVILKGPKGWANLNTKDTNVWEGDYQMVGRQGRGKADLMKQRGENRYTILDNGSFTSCLPGSDTWSVVGSEIIHDREEQVAEIWNARFKVGPVPIFYSPYLQLPVGDKRRSGFLIPNAKYTTTNYFEFYLPYYWNIAPNMDATITPHYMHRRGNIMWENEFRYLSQAGAGLMELDYLPSDKVYEDEHPNDDSSRRWLFYWQHSGVMDQVWRFNVDYTKVSDPSYFNDFDNKYGSSTDGYATQKFSVGYAVQNFNATVSTKQFQVFSEQNTSSYSAEPQLDVNYYQNDVGPFDTRIYGQAVHFVNTRDDMPEATRVHLEPTINLPLSNNWGSINTEAKLLATHYQQTNLDWYNSRNTTKLDESVNRVMPQFKVDGKMVFERDMEMLAPGYTQTLEPRAQYLYVPYRDQSDIYNYDSSLLQSDYSGLFRDRTYGGLDRIASANQVTTGVTSRIYDDAAVERFNISVGQIYYFTESRTGDDNITWENDDKTGSLVWAGDTYWRISERWGLRGGIQYDTRLDNVATSNSSIEYRRDEDRLVQLNYRYASPEYIQATLPKYYSTAEQYKNGISQVGAVASWPIADRWSIVGAYYYDTNANKQADSMLGVQYSSCCYAIRVGYERKLNGWDNDKQHAVYDNAIGFNIELRGLSSNYGLGTQEMLRSNILPYQNTL.

The N-terminal stretch at 1–24 (MKKRIPTLLATMIATALYSQQGLA) is a signal peptide. 2 cysteine pairs are disulfide-bonded: Cys31/Cys724 and Cys173/Cys725.

This sequence belongs to the LptD family. In terms of assembly, component of the lipopolysaccharide transport and assembly complex. Interacts with LptE and LptA. Post-translationally, contains two intramolecular disulfide bonds.

The protein localises to the cell outer membrane. Together with LptE, is involved in the assembly of lipopolysaccharide (LPS) at the surface of the outer membrane. In Shigella sonnei (strain Ss046), this protein is LPS-assembly protein LptD.